The sequence spans 278 residues: Tryptophan synthase alpha chain (278 aa).

Residues glutamate 50 and aspartate 61 each act as proton acceptor in the active site.

This sequence belongs to the TrpA family. In terms of assembly, tetramer of two alpha and two beta chains.

The catalysed reaction is (1S,2R)-1-C-(indol-3-yl)glycerol 3-phosphate + L-serine = D-glyceraldehyde 3-phosphate + L-tryptophan + H2O. Its pathway is amino-acid biosynthesis; L-tryptophan biosynthesis; L-tryptophan from chorismate: step 5/5. In terms of biological role, the alpha subunit is responsible for the aldol cleavage of indoleglycerol phosphate to indole and glyceraldehyde 3-phosphate. This chain is Tryptophan synthase alpha chain, found in Rhodopseudomonas palustris (strain HaA2).